The following is a 255-amino-acid chain: Cytochrome b561 and DOMON domain-containing protein At5g48750 (255 aa).

Residues 1–27 (MFLSSRTIFVGLCFLFVLAPCFTRATT) form the signal peptide. Positions 54–169 (LDSFLHYSYV…TVVNHLWQDG (116 aa)) constitute a DOMON domain. The Cytochrome b561 domain maps to 176-255 (RLGMHAMSGN…DPTWFYILIL (80 aa)). A helical membrane pass occupies residues 216–236 (IHGLVNAVCWGIFIPIGVMAA).

Its subcellular location is the membrane. The chain is Cytochrome b561 and DOMON domain-containing protein At5g48750 from Arabidopsis thaliana (Mouse-ear cress).